The following is a 488-amino-acid chain: MFGLPIPIIGLLIAVFVLVFLVLRTRVHAFIAMLIAASIAGLVGGMSADETLNSITKGFGGTLGSIGIVIGLGVMMGSVLEVSGAAEKMAYSFIKMLGQKKEEWALAITGYVVSIPIFVDSAFVILYPVAKALAKNGKRSLLTLGVALAGGLAVTHHTVPPTPGPLGVAGLFGVDIGAMLLTGMCMAFLPVVGIVLYAKWLDKKYPNFNQEVFTEEELKQKYDSYIESREKKELPSLGLSLLPIVLPIVLIFIKAVVHLFVKDVPEALTSIPYQIVSFLGHPVIVLALSVLISVYTLLPKADKNTTALHLEEGVKTAGIILLVTGAGGALGAVLRDSGAGKQLAEQIANLPISPILIPFIVSTLVRFIQGSGTVAMITAASISSPILAQIPGVNMLLAAQAATMGSLFFGYFNDSLFWVVNRMMGINDVKKQMVVWSVPTTIAWGIGGISVILANLIFGNDGSVFDLLFPVVVLASILFYIKLQNKNL.

12 consecutive transmembrane segments (helical) span residues 2–22 (FGLP…VFLV), 27–47 (VHAF…GGMS), 59–79 (FGGT…MGSV), 106–126 (LAIT…FVIL), 176–196 (IGAM…GIVL), 241–261 (LLPI…HLFV), 275–295 (IVSF…ISVY), 314–334 (VKTA…GAVL), 347–367 (IANL…LVRF), 368–388 (IQGS…PILA), 438–458 (VPTT…NLIF), and 461–481 (DGSV…LFYI).

Belongs to the GntP permease family.

Its subcellular location is the cell inner membrane. This is an uncharacterized protein from Haemophilus influenzae (strain ATCC 51907 / DSM 11121 / KW20 / Rd).